Consider the following 382-residue polypeptide: uncharacterized protein (382 aa).

12 consecutive transmembrane segments (helical) span residues 14-34, 45-65, 75-95, 102-122, 131-151, 157-177, 204-224, 231-251, 270-290, 291-311, 325-345, and 349-369; these read GLLL…LWLA, MVSS…GYLI, YLAS…VGFW, FIAG…LMCS, LLAA…LLVS, LLHV…PLLF, LGVN…GLMP, GMAN…GILG, VQVF…AMAP, ALFI…AWAC, ALLL…AMLM, and SDNL…LMLL.

The protein belongs to the major facilitator superfamily. YcaD (TC 2.A.1.26) family.

It localises to the cell inner membrane. This is an uncharacterized protein from Salmonella paratyphi A (strain ATCC 9150 / SARB42).